A 55-amino-acid polypeptide reads, in one-letter code: uncharacterized protein (55 aa).

This is an uncharacterized protein from Mycoplasma mycoides.